A 300-amino-acid polypeptide reads, in one-letter code: Ubiquitin carboxyl-terminal hydrolase 2 (300 aa).

A UCH catalytic domain is found at 2-220 (SWTTIESDAG…IRFNLMVICK (219 aa)). Cysteine 83 functions as the Nucleophile in the catalytic mechanism. The Proton donor role is filled by histidine 159. Positions 261–290 (NFVGLFVELSKLLVKDRIDKNTWNSTLETA) constitute a ULD domain.

It belongs to the peptidase C12 family. As to quaternary structure, component of the 26S proteasome. Interacts with rpn10.

The protein localises to the nucleus. It carries out the reaction Thiol-dependent hydrolysis of ester, thioester, amide, peptide and isopeptide bonds formed by the C-terminal Gly of ubiquitin (a 76-residue protein attached to proteins as an intracellular targeting signal).. In terms of biological role, ubiquitin-protein hydrolase is involved both in the processing of ubiquitin precursors and of ubiquitinated proteins. This enzyme is a thiol protease that recognizes and hydrolyzes a peptide bond at the C-terminal glycine of ubiquitin. In Schizosaccharomyces pombe (strain 972 / ATCC 24843) (Fission yeast), this protein is Ubiquitin carboxyl-terminal hydrolase 2 (uch2).